Consider the following 93-residue polypeptide: NADH-dependent phenylglyoxylate dehydrogenase subunit delta (93 aa).

4Fe-4S ferredoxin-type domains are found at residues 39-68 (MRPV…EHAA) and 66-93 (HAAW…RRSR).

In terms of assembly, dimer of heteropentamers composed of an alpha (PadG), a beta (PadI), a gamma (PadE), a delta (PadF) and an epsilon (PadH) subunit. [4Fe-4S] cluster is required as a cofactor.

It carries out the reaction phenylglyoxylate + NAD(+) + CoA = benzoyl-CoA + CO2 + NADH. Its activity is regulated as follows. Activated by magnesium ions and thiamine diphosphate. Functionally, involved in the anaerobic metabolism of phenylalanine and phenylacetate. Catalyzes the oxidative decarboxylation of phenylglyoxylate to benzoyl-CoA and CO(2). It can also react slowly with 2-oxo-3-methylbutanoate and use different electron acceptors such as benzyl viologen, methyl viologen, FAD or FMN, but NAD seems to be the physiological electron acceptor. Also catalyzes an isotope exchange between CO(2) and the carboxyl group which proves partial or complete reversibility of the oxidative decarboxylation reaction. The sequence is that of NADH-dependent phenylglyoxylate dehydrogenase subunit delta (padF) from Aromatoleum evansii (Azoarcus evansii).